The following is a 145-amino-acid chain: Cell division protein SepF (145 aa).

It belongs to the SepF family. As to quaternary structure, homodimer. Interacts with FtsZ.

It is found in the cytoplasm. In terms of biological role, cell division protein that is part of the divisome complex and is recruited early to the Z-ring. Probably stimulates Z-ring formation, perhaps through the cross-linking of FtsZ protofilaments. Its function overlaps with FtsA. This is Cell division protein SepF from Lactobacillus acidophilus (strain ATCC 700396 / NCK56 / N2 / NCFM).